The sequence spans 319 residues: Epoxyqueuosine reductase (319 aa).

Residue aspartate 128 is the Proton donor of the active site. One can recognise a 4Fe-4S ferredoxin-type domain in the interval glutamate 173 to valine 202. [4Fe-4S] cluster contacts are provided by cysteine 182, cysteine 185, cysteine 188, cysteine 192, cysteine 208, cysteine 236, cysteine 239, and cysteine 243.

This sequence belongs to the QueG family. In terms of assembly, monomer. It depends on cob(II)alamin as a cofactor. [4Fe-4S] cluster is required as a cofactor.

Its subcellular location is the cytoplasm. It catalyses the reaction epoxyqueuosine(34) in tRNA + AH2 = queuosine(34) in tRNA + A + H2O. Its pathway is tRNA modification; tRNA-queuosine biosynthesis. Catalyzes the conversion of epoxyqueuosine (oQ) to queuosine (Q), which is a hypermodified base found in the wobble positions of tRNA(Asp), tRNA(Asn), tRNA(His) and tRNA(Tyr). This is Epoxyqueuosine reductase from Gloeobacter violaceus (strain ATCC 29082 / PCC 7421).